We begin with the raw amino-acid sequence, 269 residues long: Gap junction gamma-3 protein (269 aa).

At 1–33 (MLLLELPIKCRMCGRFLRQLLAQESQHSTPVGR) the chain is on the extracellular side. Residues 34–54 (FLLPMLMGFRLLILVSSGPGV) traverse the membrane as a helical segment. The Cytoplasmic portion of the chain corresponds to 55 to 86 (FGNDENEFICHLGQPGCKTICYDVFRPLSPLR). The chain crosses the membrane as a helical span at residues 87-107 (FWAFQVILMAVPSAIYVAFTL). Topologically, residues 108–145 (YHVIGYWEVPGKENKEQETQISKGDHSKDVSGAKSLKL) are extracellular. A helical membrane pass occupies residues 146 to 166 (LWAYVAHLGVRLALEGAALGV). Residues 167–205 (QYNLYGFKMSSTFICREDPCIGSTTCFQSHPSEKTIFLN) lie on the Cytoplasmic side of the membrane. The helical transmembrane segment at 206-226 (IMFGISGACFLFIFLELALLG) threads the bilayer. The Extracellular portion of the chain corresponds to 227–269 (LGRFWRIYKHKLSFLKKLPTSESSVRSKDTTDELSVVEAKEPF). Position 261 is a phosphoserine (Ser-261).

Belongs to the connexin family. Gamma-type subfamily. In terms of assembly, a connexon is composed of a hexamer of connexins. As to expression, CNS specific. Expression is restricted to brain, spinal cord, and sciatic nerve.

Its subcellular location is the cell membrane. It localises to the cell junction. The protein resides in the gap junction. Its function is as follows. One gap junction consists of a cluster of closely packed pairs of transmembrane channels, the connexons, through which materials of low MW diffuse from one cell to a neighboring cell. This Mus musculus (Mouse) protein is Gap junction gamma-3 protein (Gjc3).